We begin with the raw amino-acid sequence, 154 residues long: Large ribosomal subunit protein uL13 (154 aa).

The disordered stretch occupies residues 132–154 (PHEAQQPEVLDVKSMNAKNTRSA).

Belongs to the universal ribosomal protein uL13 family. In terms of assembly, part of the 50S ribosomal subunit.

In terms of biological role, this protein is one of the early assembly proteins of the 50S ribosomal subunit, although it is not seen to bind rRNA by itself. It is important during the early stages of 50S assembly. This chain is Large ribosomal subunit protein uL13, found in Paracoccus denitrificans (strain Pd 1222).